A 331-amino-acid polypeptide reads, in one-letter code: GTP 3',8-cyclase (331 aa).

In terms of domain architecture, Radical SAM core spans 9-233 (SFGRQVTYVR…TATNEHTGGP (225 aa)). Arg18 contacts GTP. Residues Cys25 and Cys29 each coordinate [4Fe-4S] cluster. Position 31 (Tyr31) interacts with S-adenosyl-L-methionine. Cys32 serves as a coordination point for [4Fe-4S] cluster. Arg67 lines the GTP pocket. Gly71 serves as a coordination point for S-adenosyl-L-methionine. Position 98 (Thr98) interacts with GTP. Residue Ser122 participates in S-adenosyl-L-methionine binding. Residue Lys159 participates in GTP binding. Met193 provides a ligand contact to S-adenosyl-L-methionine. The [4Fe-4S] cluster site is built by Cys257 and Cys260. 262 to 264 (RVR) is a binding site for GTP. Cys274 contacts [4Fe-4S] cluster.

Belongs to the radical SAM superfamily. MoaA family. In terms of assembly, monomer and homodimer. Requires [4Fe-4S] cluster as cofactor.

It carries out the reaction GTP + AH2 + S-adenosyl-L-methionine = (8S)-3',8-cyclo-7,8-dihydroguanosine 5'-triphosphate + 5'-deoxyadenosine + L-methionine + A + H(+). It functions in the pathway cofactor biosynthesis; molybdopterin biosynthesis. Catalyzes the cyclization of GTP to (8S)-3',8-cyclo-7,8-dihydroguanosine 5'-triphosphate. This is GTP 3',8-cyclase from Saccharophagus degradans (strain 2-40 / ATCC 43961 / DSM 17024).